The following is a 435-amino-acid chain: Proline--tRNA ligase (435 aa).

It belongs to the class-II aminoacyl-tRNA synthetase family. ProS type 2 subfamily. In terms of assembly, homodimer.

It localises to the cytoplasm. The catalysed reaction is tRNA(Pro) + L-proline + ATP = L-prolyl-tRNA(Pro) + AMP + diphosphate. Its function is as follows. Catalyzes the attachment of proline to tRNA(Pro) in a two-step reaction: proline is first activated by ATP to form Pro-AMP and then transferred to the acceptor end of tRNA(Pro). The polypeptide is Proline--tRNA ligase (proS) (Sulfurimonas denitrificans (strain ATCC 33889 / DSM 1251) (Thiomicrospira denitrificans (strain ATCC 33889 / DSM 1251))).